The sequence spans 284 residues: Ribosomal RNA small subunit methyltransferase A (284 aa).

Residues Asn-33, Leu-35, Gly-60, Glu-81, Asp-101, and Asn-124 each contribute to the S-adenosyl-L-methionine site.

It belongs to the class I-like SAM-binding methyltransferase superfamily. rRNA adenine N(6)-methyltransferase family. RsmA subfamily.

The protein localises to the cytoplasm. The enzyme catalyses adenosine(1518)/adenosine(1519) in 16S rRNA + 4 S-adenosyl-L-methionine = N(6)-dimethyladenosine(1518)/N(6)-dimethyladenosine(1519) in 16S rRNA + 4 S-adenosyl-L-homocysteine + 4 H(+). Specifically dimethylates two adjacent adenosines (A1518 and A1519) in the loop of a conserved hairpin near the 3'-end of 16S rRNA in the 30S particle. May play a critical role in biogenesis of 30S subunits. The sequence is that of Ribosomal RNA small subunit methyltransferase A from Chlamydia felis (strain Fe/C-56) (Chlamydophila felis).